The following is a 668-amino-acid chain: MPRLALRQYNFYYRVNGEKAEELLKEYGEDGDFLLRYSESNPQNFSISVRVAEDKILHIKVTKYESDMLSIFEDERTTPNQFGSITELAEFYMEFPEKLREKNGLFLELKKPVYVPYHLEACAEEQRRTQLYRWWHGNLPASSANKLLQTEKNGTYLLRASQHIPGALVISAKTEGQVVHLTIYQDPSTGRFNIDGDRTKFQSAWLLIDSYSKNPIVEKGEASRVLYLEEPLFNTFIEADLFVDRFEIIRRPINPRESMEKTGISEEFDRLSQEALPAEQYLSKREGRRPVNAEKNRYKNIVPFDHTRVILTDRPNTPGSDYINASYVRFENSQRTKNVTFACEKSFIATQGCLETTISDFWSMVWQENSRVIVMPTMENERKEKCARYWPAEVNKPEVHGDISLTCTIERKVQRAVSDEVKAELEQEKTNRIAKGLVPEAELNGDGISYILRTLVMKKGKDTREIRQLQYLTWPDHGCPLHPYAVLNFLEDVDREYDYFNAQPIAASLPQGPIVVHCSAGIGRTGTVLVLDALLNQVKKVGLLCPMDVYKMVKYVRTYRSGLVQTEQQYQFLYKALAFYLKNNNPYPVKSFIDGDTDAFDFPRRLRPTPNASRPSSARQVTSSRPSSSASSRTSHSRPRTGPQAEPIFERSTSSTSSSSTLLKSTKK.

SH2 domains lie at Asn-10–Val-113 and Trp-134–Leu-232. In terms of domain architecture, Tyrosine-protein phosphatase spans Ile-264 to Tyr-580. The active-site Phosphocysteine intermediate is Cys-518. Residues Pro-603 to Lys-668 form a disordered region. 2 stretches are compositionally biased toward low complexity: residues Ser-616–Thr-634 and Ser-652–Lys-668.

This sequence belongs to the protein-tyrosine phosphatase family. Non-receptor class 2 subfamily. Expressed in embryonic cells, developing vulva, body wall muscles, head neurons and gonadal sheath cells.

It localises to the cytoplasm. The catalysed reaction is O-phospho-L-tyrosyl-[protein] + H2O = L-tyrosyl-[protein] + phosphate. Involved in embryonic and larval development. Plays a role in oogenesis by regulating mpk-1 phosphorylation and oocyte maturation in response to major sperm protein (MSP). During the formation of neuromuscular junctions at the larval stage, negatively regulates membrane protrusion from body wall muscles probably downstream of receptor egl-15. Plays a role in fluid homeostasis probably downstream of receptor egl-15 and adapter soc-1. Promotes vulva induction and negatively regulates fertility probably downstream of receptor let-23. Negatively regulates daf-2-mediated repression of dauer formation. This chain is Tyrosine-protein phosphatase non-receptor type ptp-2, found in Caenorhabditis elegans.